The chain runs to 228 residues: Ribulose-phosphate 3-epimerase (228 aa).

Ser-9 contacts substrate. Positions 34, 36, and 70 each coordinate a divalent metal cation. Asp-36 serves as the catalytic Proton acceptor. Residues His-70, 146-149 (GKGG), 175-177 (DGG), and 197-198 (GT) each bind substrate. Residue Asp-175 participates in a divalent metal cation binding. The active-site Proton donor is Asp-175.

This sequence belongs to the ribulose-phosphate 3-epimerase family. Requires Co(2+) as cofactor. Fe(2+) serves as cofactor. The cofactor is Mn(2+). Zn(2+) is required as a cofactor.

The catalysed reaction is D-ribulose 5-phosphate = D-xylulose 5-phosphate. Its pathway is carbohydrate degradation; pentose phosphate pathway; D-xylulose 5-phosphate from D-ribulose 5-phosphate (non-oxidative stage): step 1/1. Functionally, catalyzes the reversible epimerization of D-ribulose 5-phosphate to D-xylulose 5-phosphate. This is Ribulose-phosphate 3-epimerase from Schizosaccharomyces pombe (strain 972 / ATCC 24843) (Fission yeast).